Consider the following 237-residue polypeptide: Ribonuclease PH (237 aa).

Residues Arg-86 and 124–126 (GTR) each bind phosphate.

The protein belongs to the RNase PH family. As to quaternary structure, homohexameric ring arranged as a trimer of dimers.

It carries out the reaction tRNA(n+1) + phosphate = tRNA(n) + a ribonucleoside 5'-diphosphate. Phosphorolytic 3'-5' exoribonuclease that plays an important role in tRNA 3'-end maturation. Removes nucleotide residues following the 3'-CCA terminus of tRNAs; can also add nucleotides to the ends of RNA molecules by using nucleoside diphosphates as substrates, but this may not be physiologically important. Probably plays a role in initiation of 16S rRNA degradation (leading to ribosome degradation) during starvation. In Methylocella silvestris (strain DSM 15510 / CIP 108128 / LMG 27833 / NCIMB 13906 / BL2), this protein is Ribonuclease PH.